The primary structure comprises 205 residues: Ribosome maturation factor RimP (205 aa).

The span at 1–13 (MSNAEATTSSDRT) shows a compositional bias: polar residues. Residues 1 to 27 (MSNAEATTSSDRTGTGKAEAESVHNPE) form a disordered region. The span at 18–27 (AEAESVHNPE) shows a compositional bias: basic and acidic residues.

It belongs to the RimP family.

The protein resides in the cytoplasm. Its function is as follows. Required for maturation of 30S ribosomal subunits. The polypeptide is Ribosome maturation factor RimP (Arthrobacter sp. (strain FB24)).